Consider the following 113-residue polypeptide: UPF0060 membrane protein Mmcs_2513 (113 aa).

The next 4 helical transmembrane spans lie at 12-32 (ALFVLAALLEIGGAWLVWQGV), 37-57 (GWIWAGAGVIALGAYGFVAAF), 66-86 (ILAAYGGVFVAGSLLWGVVVD), and 92-112 (RWDLTGALVCLVGVGLIMYAP).

This sequence belongs to the UPF0060 family.

It localises to the cell membrane. This is UPF0060 membrane protein Mmcs_2513 from Mycobacterium sp. (strain MCS).